Here is a 266-residue protein sequence, read N- to C-terminus: Undecaprenyl-diphosphatase (266 aa).

8 consecutive transmembrane segments (helical) span residues 1–21 (MDTF…FLPI), 39–59 (QGLS…VMYF), 87–107 (WWII…KGFI), 111–131 (LRNI…LWWA), 144–164 (VGWK…IPGT), 183–203 (AAAR…AILV), 218–238 (ALGL…HYFL), and 246–266 (MTPF…FIFL).

It belongs to the UppP family.

The protein resides in the cell inner membrane. The catalysed reaction is di-trans,octa-cis-undecaprenyl diphosphate + H2O = di-trans,octa-cis-undecaprenyl phosphate + phosphate + H(+). Catalyzes the dephosphorylation of undecaprenyl diphosphate (UPP). Confers resistance to bacitracin. This is Undecaprenyl-diphosphatase from Shewanella piezotolerans (strain WP3 / JCM 13877).